The following is a 332-amino-acid chain: Small ribosomal subunit protein uS2 (332 aa).

This sequence belongs to the universal ribosomal protein uS2 family.

This is Small ribosomal subunit protein uS2 from Nitrobacter winogradskyi (strain ATCC 25391 / DSM 10237 / CIP 104748 / NCIMB 11846 / Nb-255).